The chain runs to 852 residues: Translation initiation factor IF-2 (852 aa).

Residues 1–240 are disordered; it reads MEDKNKTIKE…KTSSDKRDFS (240 aa). The span at 78–90 shows a compositional bias: basic and acidic residues; it reads KEVKYEESSRKQD. Residues 106–120 show a composition bias toward polar residues; it reads VRPSGDSSYPVSRSP. Residues 150-200 are compositionally biased toward gly residues; that stretch reads RGPGQGGGYQGNRGPGQGGGYQGNRGPGQQTGPGNRFGGSGPGNRSGGPGG. A compositionally biased stretch (basic and acidic residues) spans 227–240; sequence HDKEKTSSDKRDFS. The tr-type G domain occupies 347–516; that stretch reads NRPPVVTIMG…LLQAEVMDLK (170 aa). The G1 stretch occupies residues 356–363; that stretch reads GHVDHGKT. GTP is bound at residue 356–363; sequence GHVDHGKT. The G2 stretch occupies residues 381 to 385; it reads GITQH. The interval 402–405 is G3; that stretch reads DTPG. GTP-binding positions include 402–406 and 456–459; these read DTPGH and NKID. The segment at 456–459 is G4; the sequence is NKID. The G5 stretch occupies residues 492–494; that stretch reads SAR.

It belongs to the TRAFAC class translation factor GTPase superfamily. Classic translation factor GTPase family. IF-2 subfamily.

Its subcellular location is the cytoplasm. In terms of biological role, one of the essential components for the initiation of protein synthesis. Protects formylmethionyl-tRNA from spontaneous hydrolysis and promotes its binding to the 30S ribosomal subunits. Also involved in the hydrolysis of GTP during the formation of the 70S ribosomal complex. The chain is Translation initiation factor IF-2 from Leptospira borgpetersenii serovar Hardjo-bovis (strain JB197).